The chain runs to 389 residues: Sulfate adenylyltransferase (389 aa).

This sequence belongs to the sulfate adenylyltransferase family.

The catalysed reaction is sulfate + ATP + H(+) = adenosine 5'-phosphosulfate + diphosphate. The protein operates within sulfur metabolism; hydrogen sulfide biosynthesis; sulfite from sulfate: step 1/3. The polypeptide is Sulfate adenylyltransferase (Deinococcus geothermalis (strain DSM 11300 / CIP 105573 / AG-3a)).